Reading from the N-terminus, the 397-residue chain is MGFRTLDDVDVTGKRVLVRVDFNVPMAQGKVCDDTRLKRHKETLLELQKRGAKLILLSHCGRPKGQVEPEFSLHPVVQVLEKIINQPVNFASDCIGVAVQTAVEALQNGGILLLENVRFHSGEEKNAGSFAEALAHNGDLYVNDAFSVSHRAHASVEGITHFLPSYAGRSLQCELQALEKGLGKPERPVIAIVGGAKVSSKLFVLNHLVKKVDYLVIGGGMANSFLAAQGVCVGKSLCEHALIETVKKVIEKARECQCTLLLPVDAIVGFRFEKDAPHRLYDIGDIPEDGMILDVGTRSIAHINAVIDKAATLVWNGPLGVFEMSPFDQGTIAVARHAAELSLTGKLVSIAGGGDTVFALNHAGVADDFTYLSTAGGAFLEWMEGKMLPGILALTQA.

Substrate is bound by residues 21 to 23 (DFN), Arg-36, 59 to 62 (HCGR), Arg-118, and Arg-151. ATP contacts are provided by residues Lys-201, Glu-323, and 353-356 (GGDT).

This sequence belongs to the phosphoglycerate kinase family. Monomer.

Its subcellular location is the cytoplasm. The enzyme catalyses (2R)-3-phosphoglycerate + ATP = (2R)-3-phospho-glyceroyl phosphate + ADP. The protein operates within carbohydrate degradation; glycolysis; pyruvate from D-glyceraldehyde 3-phosphate: step 2/5. The protein is Phosphoglycerate kinase of Bartonella henselae (strain ATCC 49882 / DSM 28221 / CCUG 30454 / Houston 1) (Rochalimaea henselae).